A 319-amino-acid polypeptide reads, in one-letter code: Beta-ketoacyl-[acyl-carrier-protein] synthase III (319 aa).

Active-site residues include C113 and H246. Residues 247–251 form an ACP-binding region; sequence QANIR. N276 is a catalytic residue.

This sequence belongs to the thiolase-like superfamily. FabH family. In terms of assembly, homodimer.

The protein resides in the cytoplasm. It catalyses the reaction malonyl-[ACP] + acetyl-CoA + H(+) = 3-oxobutanoyl-[ACP] + CO2 + CoA. It participates in lipid metabolism; fatty acid biosynthesis. Functionally, catalyzes the condensation reaction of fatty acid synthesis by the addition to an acyl acceptor of two carbons from malonyl-ACP. Catalyzes the first condensation reaction which initiates fatty acid synthesis and may therefore play a role in governing the total rate of fatty acid production. Possesses both acetoacetyl-ACP synthase and acetyl transacylase activities. Its substrate specificity determines the biosynthesis of branched-chain and/or straight-chain of fatty acids. In Ehrlichia ruminantium (strain Welgevonden), this protein is Beta-ketoacyl-[acyl-carrier-protein] synthase III.